The sequence spans 411 residues: LIM domain-binding protein 1 (411 aa).

An N-acetylserine modification is found at Ser2. Phosphothreonine is present on Thr61. Phosphoserine is present on residues Ser265 and Ser302. Disordered stretches follow at residues 284 to 330 (PPAE…TFAL) and 367 to 411 (DAAN…QASQ). Positions 302-318 (SGGSTMSSGGGNTNNSN) are enriched in low complexity. The LIM interaction domain (LID) domain occupies 336–375 (DVMVVGEPTLMGGEFGDEDERLITRLENTQFDAANGIDDE).

This sequence belongs to the LDB family. Interacts with ESR1. Forms homodimers and heterodimers. Interacts with and activates LHX1/LIM1. Interacts with the LIM domains of ISL1 and LMO2. Can assemble in a complex with LMO2 and TAL1/SCL but does not interact with TAL1/SCL directly. Strongly interacts with the LIM2 domain of LMX1A and more weakly with the LIM1 domain. Homodimerization is not required for, and does not effect, LMX1A-binding. Component of a nuclear TAL-1 complex composed at least of CBFA2T3, LDB1, TAL1 and TCF3. Interacts with LHX6 and LHX9. At neuronal promoters, forms a complex with LHX3 involved in the specification of interneurons, in motor neurons, it is displaced by ISL1 to form a ternary complex in which ISL1 contacts both LHX3 and LDB1. Interacts with SLK; leading to negatively regulate SLK kinase activity. Interacts with YWHAZ. Interacts with PRDM1/BLIMP1. Interacts with LMO4. Interacts with RLIM/RNF12; the interaction inhibits the ubiquitination of LMO proteins. Ubiquitinated by RLIM/RNF12, leading to its degradation by the proteasome. As to expression, expressed in multiple adult tissues including heart, brain, liver, kidney, testis, lung and muscle, with expression highest in the pituitary gland and skin.

The protein resides in the nucleus. Its function is as follows. Binds to the LIM domain of a wide variety of LIM domain-containing transcription factors. May regulate the transcriptional activity of LIM-containing proteins by determining specific partner interactions. Plays a role in the development of interneurons and motor neurons in cooperation with LHX3 and ISL1. Acts synergistically with LHX1/LIM1 in axis formation and activation of gene expression. Acts with LMO2 in the regulation of red blood cell development, maintaining erythroid precursors in an immature state. The protein is LIM domain-binding protein 1 (Ldb1) of Mus musculus (Mouse).